We begin with the raw amino-acid sequence, 1736 residues long: Centrosomal protein of 152 kDa (1736 aa).

The interaction with PLK4 stretch occupies residues 1–60 (MSLEFGSVALQTQNEDEEFDKEDFEREKELQQLLTDLPHDMLDDELSSPERHDSDCSMDG). Residues 1–127 (MSLEFGSVAL…SGYSPPGKRE (127 aa)) are disordered. 2 stretches are compositionally biased toward basic and acidic residues: residues 61–82 (RAAEPHPSEHLERKWIERDILP) and 94–105 (EENRSKTEDQHL). Coiled-coil stretches lie at residues 228–481 (IIQL…AELG), 552–651 (HLVS…QEFD), 692–776 (LEVY…TERQ), 835–868 (AAVSKAEAAAVLAEEQARQVQQEKELATKEALRK), 950–1075 (NVMS…YEED), and 1205–1315 (GHCF…KIKR). The segment at 571 to 592 (FQQSKDGDSGMETKTDTSEKTT) is disordered. Residues 575-592 (KDGDSGMETKTDTSEKTT) show a composition bias toward basic and acidic residues. At Thr-1277 the chain carries Phosphothreonine. 4 disordered regions span residues 1416–1479 (GTER…ASTA), 1543–1562 (EKNSSPRCISESRHTTLRSP), 1574–1614 (GSPT…SDST), and 1677–1736 (QQGK…SPLE). A compositionally biased stretch (basic and acidic residues) spans 1462–1473 (RRLEESKHREMR). Polar residues-rich tracts occupy residues 1576–1595 (PTETDSIASEKSQGVGSQDS) and 1603–1614 (PSSSPAWPSDST). Lys-1714 carries the N6-acetyllysine modification.

It belongs to the CEP152 family. Interacts (via N-terminus) with PLK4; the interaction is mutally exclusive with a PLK4:CEP192 interaction. Interacts (via C-terminus) with CPAP (via-N-terminus). Interacts with CINP. Interacts with CDK5RAP2, WDR62, CEP63 and CEP131. CEP63, CDK5RAP2, CEP152, WDR62 are proposed to form a stepwise assembled complex at the centrosome forming a ring near parental centrioles. Interacts with DEUP1; this interaction recruits CEP152 to the deuterosome. The interactions with CEP63 and DEUP1 are mutually exclusive. Interacts with CCDC66.

It localises to the cytoplasm. It is found in the cytoskeleton. The protein localises to the microtubule organizing center. The protein resides in the centrosome. Its subcellular location is the centriole. Functionally, necessary for centrosome duplication; the function also seems to involve CEP63, CDK5RAP2 and WDR62 through a stepwise assembled complex at the centrosome that recruits CDK2 required for centriole duplication. Acts as a molecular scaffold facilitating the interaction of PLK4 and CPAP, 2 molecules involved in centriole formation. Proposed to snatch PLK4 away from PLK4:CEP92 complexes in early G1 daughter centriole and to reposition PLK4 at the outer boundary of a newly forming CEP152 ring structure. Also plays a key role in deuterosome-mediated centriole amplification in multiciliated that can generate more than 100 centrioles. Overexpression of cep152 can drive amplification of centrioles. This is Centrosomal protein of 152 kDa (Cep152) from Mus musculus (Mouse).